A 194-amino-acid polypeptide reads, in one-letter code: Holliday junction branch migration complex subunit RuvA (194 aa).

Residues 1–63 form a domain I region; sequence MFEYMKGMIV…EDEAHLYGFV (63 aa). The interval 64–142 is domain II; the sequence is DKEELAMFKK…DSQVEYDQNF (79 aa). A flexible linker region spans residues 143-146; it reads FNHE. A domain III region spans residues 146–194; the sequence is ENKNNNEVVDALMALGYTKHEGEQAASAVRDTSLSTEEMIRKALNWLAR.

It belongs to the RuvA family. Homotetramer. Forms an RuvA(8)-RuvB(12)-Holliday junction (HJ) complex. HJ DNA is sandwiched between 2 RuvA tetramers; dsDNA enters through RuvA and exits via RuvB. An RuvB hexamer assembles on each DNA strand where it exits the tetramer. Each RuvB hexamer is contacted by two RuvA subunits (via domain III) on 2 adjacent RuvB subunits; this complex drives branch migration. In the full resolvosome a probable DNA-RuvA(4)-RuvB(12)-RuvC(2) complex forms which resolves the HJ.

The protein localises to the cytoplasm. Functionally, the RuvA-RuvB-RuvC complex processes Holliday junction (HJ) DNA during genetic recombination and DNA repair, while the RuvA-RuvB complex plays an important role in the rescue of blocked DNA replication forks via replication fork reversal (RFR). RuvA specifically binds to HJ cruciform DNA, conferring on it an open structure. The RuvB hexamer acts as an ATP-dependent pump, pulling dsDNA into and through the RuvAB complex. HJ branch migration allows RuvC to scan DNA until it finds its consensus sequence, where it cleaves and resolves the cruciform DNA. This is Holliday junction branch migration complex subunit RuvA from Alkaliphilus metalliredigens (strain QYMF).